Here is a 490-residue protein sequence, read N- to C-terminus: MDPILVLVFTLSCLFLLSLWRQSSERGKLPPGPTPLPIIGNILQINVKDICQSFTNLSKVYGPVYTLYLGRKPTVVLHGYEAVKEALVDHGEEFAGRGRLPVFDKATNGMGIIFSKGNVWKNTRRFSLTTLRNLGMGKRSIEDRVQEEARCLVEELRKTNGSPCDPTFILGCAPCNVICSIIFQDRFDYKDRDFLNLMEKLNEITKIMSTPWLQVCNTFPVLLDYCPGSHNKVFKNYACIKNFLLEKIKEHEESLDVTIPRDFIDYFLINGGQENGNYPLKNRLEHLAITVTDLFSAGTETTSTTLRYALLLLLKYPHVTAKVQEEIEHVIGKHRRPCMQDRSHMPYTDAMIHEVQRFIDLVPNSLPHEVTCDIKFRNYFIPKGTNVITSLSSVLRDSKEFPNPEKFDPGHFLDENGKFKKSDYFMPFSTGKRICAGEGLARMELFLFLTSILQNFNLKPLVHPKDIDVTPMLIGLASVPPAFQLCFIPS.

Serine 127 carries the phosphoserine modification. Residues lysine 249 and lysine 375 each carry the N6-acetyllysine modification. Position 435 (cysteine 435) interacts with heme.

Belongs to the cytochrome P450 family. Requires heme as cofactor. Expressed in heart and liver.

The protein resides in the endoplasmic reticulum membrane. It is found in the microsome membrane. It catalyses the reaction an organic molecule + reduced [NADPH--hemoprotein reductase] + O2 = an alcohol + oxidized [NADPH--hemoprotein reductase] + H2O + H(+). In terms of biological role, metabolizes arachidonic acid to several midchain and omega-terminal hydroxyeicosatetraenoic acids (HETE). In Mus musculus (Mouse), this protein is Cytochrome P450 2C50.